Here is a 370-residue protein sequence, read N- to C-terminus: MTLPPSLRSVEVDGAQPYTISIAPGLLADGARLARHVRGRHVLLLSDTQVAPHYAAGVRAALLQARPDLQLGELVIAAGEASKTLDNFSLAITALAELGATRDACVFALGGGVVGDLAGFAAACWMRGVDCVQLPTSLLAMVDSSVGGKTAVDIPQGKNLVGAFHPPRAVIADTDTLRTLPTRELRAGLAEVIKYGAIGDPLFFQWLHAERRALLDGDPAALAQAIARSCEHKADIVARDPLEKGERALLNLGHTFGHAIETEQGYGAPGNDNLNHGEAVAVGMVLAARLSAALGMADAQDTEALRTLLHEFGLPTQIPTGLAPEALLGRMRLDKKNIAGRLRLVLWRGIGKAEVVPDVDEAAVLEILAD.

NAD(+) contacts are provided by residues 112–116, 136–137, Lys149, Lys158, and 176–179; these read GVVGD, TS, and TLRT. Zn(2+)-binding residues include Glu191, His254, and His276.

This sequence belongs to the sugar phosphate cyclases superfamily. Dehydroquinate synthase family. It depends on Co(2+) as a cofactor. Requires Zn(2+) as cofactor. The cofactor is NAD(+).

It is found in the cytoplasm. The enzyme catalyses 7-phospho-2-dehydro-3-deoxy-D-arabino-heptonate = 3-dehydroquinate + phosphate. It participates in metabolic intermediate biosynthesis; chorismate biosynthesis; chorismate from D-erythrose 4-phosphate and phosphoenolpyruvate: step 2/7. In terms of biological role, catalyzes the conversion of 3-deoxy-D-arabino-heptulosonate 7-phosphate (DAHP) to dehydroquinate (DHQ). This chain is 3-dehydroquinate synthase, found in Xanthomonas campestris pv. campestris (strain 8004).